The sequence spans 508 residues: Protein FAM217A (508 aa).

The protein belongs to the FAM217 family.

This chain is Protein FAM217A (FAM217A), found in Homo sapiens (Human).